The following is a 192-amino-acid chain: Xanthine phosphoribosyltransferase (192 aa).

Residues Leu-20 and Asn-27 each contribute to the xanthine site. 128-132 (ANGDA) is a binding site for 5-phospho-alpha-D-ribose 1-diphosphate. Residue Lys-156 participates in xanthine binding.

This sequence belongs to the purine/pyrimidine phosphoribosyltransferase family. Xpt subfamily. In terms of assembly, homodimer.

The protein localises to the cytoplasm. It carries out the reaction XMP + diphosphate = xanthine + 5-phospho-alpha-D-ribose 1-diphosphate. It participates in purine metabolism; XMP biosynthesis via salvage pathway; XMP from xanthine: step 1/1. Functionally, converts the preformed base xanthine, a product of nucleic acid breakdown, to xanthosine 5'-monophosphate (XMP), so it can be reused for RNA or DNA synthesis. This chain is Xanthine phosphoribosyltransferase, found in Staphylococcus aureus (strain MRSA252).